Here is a 159-residue protein sequence, read N- to C-terminus: MAKVDVVSRVTELAEQVLSSLGMELVELEYKHEGRELVLRLFIDKEGGVTLDDCESVSRDLSQILEVEDIITGHYRFEVSSPGLDRPLKKGSDYEKYAGRLVKIRTFEALADDAGNKRKTFLGELKGLKEGQVHIALKEGQSAVIPLDKIAKANLEFEF.

Belongs to the RimP family.

It localises to the cytoplasm. Its function is as follows. Required for maturation of 30S ribosomal subunits. The sequence is that of Ribosome maturation factor RimP from Geotalea daltonii (strain DSM 22248 / JCM 15807 / FRC-32) (Geobacter daltonii).